The primary structure comprises 227 residues: General transcription factor 3C polypeptide 6 (227 aa).

The disordered stretch occupies residues 157–227 (DEAAGPASDK…DGNVSQNNQS (71 aa)). Basic and acidic residues predominate over residues 186 to 195 (EQEKVEHSEV). The segment covering 203 to 227 (ETPSEMESSVFMGTQDGNVSQNNQS) has biased composition (polar residues).

It belongs to the TFIIIC subunit 6 family. In terms of assembly, part of the TFIIIC subcomplex TFIIIC2, consisting of six subunits, GTF3C1, GTF3C2, GTF3C3, GTF3C4, GTF3C5 and GTF3C6. Interacts with GTF3C4 and GTF3C5.

Its subcellular location is the nucleus. Functionally, involved in RNA polymerase III-mediated transcription. Integral, tightly associated component of the DNA-binding TFIIIC2 subcomplex that directly binds tRNA and virus-associated RNA promoters. The polypeptide is General transcription factor 3C polypeptide 6 (Mus musculus (Mouse)).